Consider the following 146-residue polypeptide: Phospholipase A2, membrane associated (146 aa).

The first 21 residues, 1-21, serve as a signal peptide directing secretion; that stretch reads MKVLLLLAASIMAFGSIQVQG. Disulfide bonds link C47–C139, C49–C65, C64–C119, C70–C146, C71–C112, C80–C105, and C98–C110. Ca(2+) contacts are provided by H48, G50, and G52. Residue H68 is part of the active site. Residue D69 coordinates Ca(2+). The active site involves D113.

This sequence belongs to the phospholipase A2 family. Requires Ca(2+) as cofactor. As to expression, mainly in the Paneth cells adjacent to the stem population in the small intestines.

Its subcellular location is the secreted. The protein localises to the cell membrane. The protein resides in the mitochondrion outer membrane. It carries out the reaction a 1,2-diacyl-sn-glycero-3-phosphoethanolamine + H2O = a 1-acyl-sn-glycero-3-phosphoethanolamine + a fatty acid + H(+). The catalysed reaction is 1-hexadecanoyl-2-(9Z-octadecenoyl)-sn-glycero-3-phosphoethanolamine + H2O = 1-hexadecanoyl-sn-glycero-3-phosphoethanolamine + (9Z)-octadecenoate + H(+). The enzyme catalyses 1-hexadecanoyl-2-(9Z,12Z-octadecadienoyl)-sn-glycero-3-phosphoethanolamine + H2O = 1-hexadecanoyl-sn-glycero-3-phosphoethanolamine + (9Z,12Z)-octadecadienoate + H(+). It catalyses the reaction 1-hexadecanoyl-2-(5Z,8Z,11Z,14Z-eicosatetraenoyl)-sn-glycero-3-phosphoethanolamine + H2O = 1-hexadecanoyl-sn-glycero-3-phosphoethanolamine + (5Z,8Z,11Z,14Z)-eicosatetraenoate + H(+). It carries out the reaction N-hexadecanoyl-1,2-di-(9Z-octadecenoyl)-sn-glycero-3-phosphoethanolamine + H2O = N-hexadecanoyl-1-(9Z-octadecenoyl)-sn-glycero-3-phosphoethanolamine + (9Z)-octadecenoate + H(+). The catalysed reaction is 1,2-dihexadecanoyl-sn-glycero-3-phospho-(1'-sn-glycerol) + H2O = 1-hexadecanoyl-sn-glycero-3-phospho-(1'-sn-glycerol) + hexadecanoate + H(+). The enzyme catalyses 1-hexadecanoyl-2-(9Z-octadecenoyl)-sn-glycero-3-phosphoglycerol + H2O = 1-hexadecanoyl-sn-glycero-3-phosphoglycerol + (9Z)-octadecenoate + H(+). It catalyses the reaction 1-hexadecanoyl-2-(9Z-octadecenoyl)-sn-glycero-3-phospho-(1'-sn-glycerol) + H2O = 1-hexadecanoyl-sn-glycero-3-phospho-(1'-sn-glycerol) + (9Z)-octadecenoate + H(+). It carries out the reaction a 1,2-diacyl-sn-glycero-3-phosphocholine + H2O = a 1-acyl-sn-glycero-3-phosphocholine + a fatty acid + H(+). The catalysed reaction is 1,2-dihexadecanoyl-sn-glycero-3-phosphocholine + H2O = 1-hexadecanoyl-sn-glycero-3-phosphocholine + hexadecanoate + H(+). The enzyme catalyses 1-hexadecanoyl-2-(9Z-octadecenoyl)-sn-glycero-3-phosphocholine + H2O = 1-hexadecanoyl-sn-glycero-3-phosphocholine + (9Z)-octadecenoate + H(+). It catalyses the reaction 1-hexadecanoyl-2-(9Z,12Z-octadecadienoyl)-sn-glycero-3-phosphocholine + H2O = (9Z,12Z)-octadecadienoate + 1-hexadecanoyl-sn-glycero-3-phosphocholine + H(+). It carries out the reaction 1-hexadecanoyl-2-(4Z,7Z,10Z,13Z,16Z,19Z-docosahexaenoyl)-sn-glycero-3-phosphocholine + H2O = (4Z,7Z,10Z,13Z,16Z,19Z)-docosahexaenoate + 1-hexadecanoyl-sn-glycero-3-phosphocholine + H(+). Functionally, secretory calcium-dependent phospholipase A2 that primarily targets extracellular phospholipids with implications in host antimicrobial defense, inflammatory response and tissue regeneration. Hydrolyzes the ester bond of the fatty acyl group attached at sn-2 position of phospholipids (phospholipase A2 activity) with preference for phosphatidylethanolamines and phosphatidylglycerols over phosphatidylcholines. Contributes to lipid remodeling of cellular membranes and generation of lipid mediators involved in pathogen clearance. Displays bactericidal activity against Gram-positive bacteria by directly hydrolyzing phospholipids of the bacterial membrane. Upon sterile inflammation, targets membrane phospholipids of extracellular mitochondria released from activated platelets, generating free unsaturated fatty acids such as arachidonate that is used by neighboring leukocytes to synthesize inflammatory eicosanoids such as leukotrienes. Simultaneously, by compromising mitochondrial membrane integrity, promotes the release in circulation of potent damage-associated molecular pattern molecules that activate the innate immune response. Plays a stem cell regulator role in the intestinal crypt. Within intracellular compartment mediates Paneth cell differentiation and its stem cell supporting functions by inhibiting Wnt signaling pathway in intestinal stem cell (ICS). Secreted in the intestinal lumen upon inflammation, acts in an autocrine way and promotes prostaglandin E2 synthesis that stimulates Wnt signaling pathway in ICS cells and tissue regeneration. May play a role in the biosynthesis of N-acyl ethanolamines that regulate energy metabolism and inflammation. Hydrolyzes N-acyl phosphatidylethanolamines to N-acyl lysophosphatidylethanolamines, which are further cleaved by a lysophospholipase D to release N-acyl ethanolamines. Independent of its catalytic activity, acts as a ligand for integrins. Binds to and activates integrins ITGAV:ITGB3, ITGA4:ITGB1 and ITGA5:ITGB1. Binds to a site (site 2) which is distinct from the classical ligand-binding site (site 1) and induces integrin conformational changes and enhanced ligand binding to site 1. Induces cell proliferation in an integrin-dependent manner. The protein is Phospholipase A2, membrane associated (Pla2g2a) of Mus musculus (Mouse).